The primary structure comprises 103 residues: Integration host factor subunit beta (103 aa).

The disordered stretch occupies residues 59-82; the sequence is RLGRNPKTGESVALPGKHVPHFKP.

It belongs to the bacterial histone-like protein family. Heterodimer of an alpha and a beta chain.

Its function is as follows. This protein is one of the two subunits of integration host factor, a specific DNA-binding protein that functions in genetic recombination as well as in transcriptional and translational control. The protein is Integration host factor subunit beta of Xanthomonas oryzae pv. oryzae (strain MAFF 311018).